We begin with the raw amino-acid sequence, 188 residues long: GMP synthase [glutamine-hydrolyzing] subunit A (188 aa).

The region spanning 2–188 (KVGLVYYGGQ…FKNFLGVCRK (187 aa)) is the Glutamine amidotransferase type-1 domain. Residue C79 is the Nucleophile of the active site. Active-site residues include H166 and E168.

Heterodimer composed of a glutamine amidotransferase subunit (A) and a GMP-binding subunit (B).

It catalyses the reaction XMP + L-glutamine + ATP + H2O = GMP + L-glutamate + AMP + diphosphate + 2 H(+). Its pathway is purine metabolism; GMP biosynthesis; GMP from XMP (L-Gln route): step 1/1. Catalyzes the synthesis of GMP from XMP. This is GMP synthase [glutamine-hydrolyzing] subunit A from Saccharolobus solfataricus (strain ATCC 35092 / DSM 1617 / JCM 11322 / P2) (Sulfolobus solfataricus).